Consider the following 589-residue polypeptide: DNA ligase (589 aa).

Residue E250 participates in ATP binding. K252 acts as the N6-AMP-lysine intermediate in catalysis. The ATP site is built by R257, R272, E302, F342, R417, and K423.

It belongs to the ATP-dependent DNA ligase family. Requires Mg(2+) as cofactor.

It catalyses the reaction ATP + (deoxyribonucleotide)n-3'-hydroxyl + 5'-phospho-(deoxyribonucleotide)m = (deoxyribonucleotide)n+m + AMP + diphosphate.. Its function is as follows. DNA ligase that seals nicks in double-stranded DNA during DNA replication, DNA recombination and DNA repair. The polypeptide is DNA ligase (Cenarchaeum symbiosum (strain A)).